The sequence spans 274 residues: Bis(5'-nucleosyl)-tetraphosphatase, symmetrical (274 aa).

The protein belongs to the Ap4A hydrolase family.

The enzyme catalyses P(1),P(4)-bis(5'-adenosyl) tetraphosphate + H2O = 2 ADP + 2 H(+). Hydrolyzes diadenosine 5',5'''-P1,P4-tetraphosphate to yield ADP. The protein is Bis(5'-nucleosyl)-tetraphosphatase, symmetrical of Shewanella loihica (strain ATCC BAA-1088 / PV-4).